The sequence spans 424 residues: Calreticulin-2 (424 aa).

The first 22 residues, 1–22 (MAKMIPSLVSLILIGLVAIASA), serve as a signal peptide directing secretion. The N-linked (GlcNAc...) asparagine glycan is linked to asparagine 59. An intrachain disulfide couples cysteine 108 to cysteine 140. An alpha-D-glucoside-binding residues include tyrosine 112, lysine 114, tyrosine 131, and aspartate 138. A run of 7 repeats spans residues 194-205 (KQTGSLYSDWDL), 213-224 (DPSAKKPEDWDE), 230-241 (DPEDKKPDGYDD), 248-259 (DTDSKKPEDWDD), 263-273 (GEWTAPTIPNP), 277-287 (GEWKPKQIKNP), and 291-301 (GKWEAPLIDNP). A 4 X approximate repeats region spans residues 194–259 (KQTGSLYSDW…DSKKPEDWDD (66 aa)). The span at 210 to 220 (KIKDPSAKKPE) shows a compositional bias: basic and acidic residues. Residues 210–279 (KIKDPSAKKP…IPNPEYMGEW (70 aa)) form a disordered region. Over residues 221-230 (DWDEQEYISD) the composition is skewed to acidic residues. The segment covering 231–255 (PEDKKPDGYDDIPKEIPDTDSKKPE) has biased composition (basic and acidic residues). Residues 263-301 (GEWTAPTIPNPEYMGEWKPKQIKNPNYKGKWEAPLIDNP) are 3 X approximate repeats. Glutamate 321 contacts an alpha-D-glucoside. Over residues 362–378 (FDEAEKKNEEEESKDAP) the composition is skewed to basic and acidic residues. The disordered stretch occupies residues 362-424 (FDEAEKKNEE…EKDATAHDEL (63 aa)). The span at 379–397 (AESDAEDEPEDDEGGDDSD) shows a compositional bias: acidic residues. Phosphoserine is present on residues serine 381 and serine 396. Positions 398–424 (SESKAEETKSVDSEETSEKDATAHDEL) are enriched in basic and acidic residues. The short motif at 421–424 (HDEL) is the Prevents secretion from ER element.

Belongs to the calreticulin family.

Its subcellular location is the endoplasmic reticulum lumen. Its function is as follows. Molecular calcium-binding chaperone promoting folding, oligomeric assembly and quality control in the ER via the calreticulin/calnexin cycle. This lectin may interact transiently with almost all of the monoglucosylated glycoproteins that are synthesized in the ER. This is Calreticulin-2 (CRT2) from Arabidopsis thaliana (Mouse-ear cress).